The sequence spans 158 residues: Transcription elongation factor GreB (158 aa).

Belongs to the GreA/GreB family. GreB subfamily.

Its function is as follows. Necessary for efficient RNA polymerase transcription elongation past template-encoded arresting sites. The arresting sites in DNA have the property of trapping a certain fraction of elongating RNA polymerases that pass through, resulting in locked ternary complexes. Cleavage of the nascent transcript by cleavage factors such as GreA or GreB allows the resumption of elongation from the new 3'terminus. GreB releases sequences of up to 9 nucleotides in length. This is Transcription elongation factor GreB from Escherichia coli O157:H7.